Consider the following 435-residue polypeptide: 5-methylthioadenosine/S-adenosylhomocysteine deaminase (435 aa).

Residues His65 and His67 each contribute to the Zn(2+) site. Positions 94, 150, and 189 each coordinate substrate. His216 serves as a coordination point for Zn(2+). The substrate site is built by Glu219 and Asp304. Asp304 contributes to the Zn(2+) binding site.

It belongs to the metallo-dependent hydrolases superfamily. MTA/SAH deaminase family. Zn(2+) is required as a cofactor.

It carries out the reaction S-adenosyl-L-homocysteine + H2O + H(+) = S-inosyl-L-homocysteine + NH4(+). The enzyme catalyses S-methyl-5'-thioadenosine + H2O + H(+) = S-methyl-5'-thioinosine + NH4(+). Catalyzes the deamination of 5-methylthioadenosine and S-adenosyl-L-homocysteine into 5-methylthioinosine and S-inosyl-L-homocysteine, respectively. Is also able to deaminate adenosine. In Bacillus cereus (strain B4264), this protein is 5-methylthioadenosine/S-adenosylhomocysteine deaminase.